The following is a 326-amino-acid chain: Tetraacyldisaccharide 4'-kinase (326 aa).

53-60 (SVGGNGKT) contributes to the ATP binding site.

Belongs to the LpxK family.

The catalysed reaction is a lipid A disaccharide + ATP = a lipid IVA + ADP + H(+). It functions in the pathway glycolipid biosynthesis; lipid IV(A) biosynthesis; lipid IV(A) from (3R)-3-hydroxytetradecanoyl-[acyl-carrier-protein] and UDP-N-acetyl-alpha-D-glucosamine: step 6/6. Transfers the gamma-phosphate of ATP to the 4'-position of a tetraacyldisaccharide 1-phosphate intermediate (termed DS-1-P) to form tetraacyldisaccharide 1,4'-bis-phosphate (lipid IVA). The chain is Tetraacyldisaccharide 4'-kinase from Actinobacillus pleuropneumoniae serotype 5b (strain L20).